Consider the following 412-residue polypeptide: MGQDQTKQQIEKGLQLYQSNQTEKALQVWTKVLEKSSDLMGRFRVLGCLVTAHSEMGRYKEMLKFAVVQIDTARELEDADFLLESYLNLARSNEKLCEFHKTISYCKTCLGLPGTRAGAQLGGQVSLSMGNAFLGLSVFQKALESFEKALRYAHNNDDAMLECRVCCSLGSFYAQVKDYEKALFFPCKAAELVNNYGKGWSLKYRAMSQYHMAVAYRLLGRLGSAMECCEESMKIALQHGDRPLQALCLLCFADIHRSRGDLETAFPRYDSAMSIMTEIGNRLGQVQALLGVAKCWVARKALDKALDAIERAQDLAEEVGNKLSQLKLHCLSESIYRSKGLQRELRAHVVRFHECVEETELYCGLCGESIGEKNSRLQALPCSHIFHLRCLQNNGTRSCPNCRRSSMKPGFV.

A lipid anchor (N-myristoyl glycine) is attached at glycine 2. 7 TPR repeats span residues 6-39, 83-116, 123-156, 163-196, 206-239, 246-279, and 286-319; these read TKQQIEKGLQLYQSNQTEKALQVWTKVLEKSSDL, LESYLNLARSNEKLCEFHKTISYCKTCLGLPGTR, GQVSLSMGNAFLGLSVFQKALESFEKALRYAHNN, CRVCCSLGSFYAQVKDYEKALFFPCKAAELVNNY, AMSQYHMAVAYRLLGRLGSAMECCEESMKIALQH, ALCLLCFADIHRSRGDLETAFPRYDSAMSIMTEI, and VQALLGVAKCWVARKALDKALDAIERAQDLAEEV. Tyrosine 196 carries the post-translational modification Phosphotyrosine. The RING-type zinc finger occupies 363-403; the sequence is CGLCGESIGEKNSRLQALPCSHIFHLRCLQNNGTRSCPNCR. Phosphoserine is present on serine 405.

Belongs to the RAPsyn family. Ubiquitinated by the BCR(KLHL8) complex, leading to its degradation.

The protein resides in the cell membrane. It is found in the postsynaptic cell membrane. The protein localises to the cytoplasm. It localises to the cytoskeleton. Functionally, postsynaptic protein required for clustering of nicotinic acetylcholine receptors (nAChRs) at the neuromuscular junction. It may link the receptor to the underlying postsynaptic cytoskeleton, possibly by direct association with actin or spectrin. This is 43 kDa receptor-associated protein of the synapse (RAPSN) from Homo sapiens (Human).